The sequence spans 57 residues: MKPAVDEMFPEGAGPYVDLDEAGGSTGLLMDLAANEKAVHADFFNDFEDLFDDDDIQ.

T26 bears the Phosphothreonine mark.

The protein belongs to the CSN9 family. In terms of assembly, component of the CSN complex, composed of COPS1/GPS1, COPS2, COPS3, COPS4, COPS5, COPS6, COPS7 (COPS7A or COPS7B), COPS8 and COPS9. In the complex, it interacts directly with COPS3, COPS5 and COPS6.

It is found in the nucleus. Its subcellular location is the cytoplasm. The protein localises to the nucleoplasm. Component of the COP9 signalosome complex (CSN), a complex involved in various cellular and developmental processes. The CSN complex is an essential regulator of the ubiquitin (Ubl) conjugation pathway by mediating the deneddylation of the cullin subunits of SCF-type E3 ligase complexes, leading to decrease the Ubl ligase activity of SCF-type complexes such as SCF, CSA or DDB2. The complex is also involved in phosphorylation of p53/TP53, c-jun/JUN, IkappaBalpha/NFKBIA, ITPK1 and IRF8/ICSBP, possibly via its association with CK2 and PKD kinases. CSN-dependent phosphorylation of TP53 and JUN promotes and protects degradation by the Ubl system, respectively. Plays a role in cell proliferation. The polypeptide is COP9 signalosome complex subunit 9 (Bos taurus (Bovine)).